A 100-amino-acid polypeptide reads, in one-letter code: NADH-quinone oxidoreductase subunit K (100 aa).

A run of 3 helical transmembrane segments spans residues 2–22, 28–48, and 63–83; these read ISLNHYLLLCVILFCIGLFGI, ILMLFFSTEILLNAINIGFVA, and LFIIAIAASEIAVGLGLVVIW.

The protein belongs to the complex I subunit 4L family. As to quaternary structure, NDH-1 is composed of 14 different subunits. Subunits NuoA, H, J, K, L, M, N constitute the membrane sector of the complex.

The protein resides in the cell inner membrane. It carries out the reaction a quinone + NADH + 5 H(+)(in) = a quinol + NAD(+) + 4 H(+)(out). Its function is as follows. NDH-1 shuttles electrons from NADH, via FMN and iron-sulfur (Fe-S) centers, to quinones in the respiratory chain. The immediate electron acceptor for the enzyme in this species is believed to be ubiquinone. Couples the redox reaction to proton translocation (for every two electrons transferred, four hydrogen ions are translocated across the cytoplasmic membrane), and thus conserves the redox energy in a proton gradient. This is NADH-quinone oxidoreductase subunit K from Helicobacter hepaticus (strain ATCC 51449 / 3B1).